We begin with the raw amino-acid sequence, 550 residues long: Methionine--tRNA ligase (550 aa).

The 'HIGH' region signature appears at proline 13 to histidine 23. Residues cysteine 145, cysteine 148, cysteine 158, and cysteine 161 each coordinate Zn(2+). The 'KMSKS' region signature appears at glutamine 331–serine 335. Lysine 334 serves as a coordination point for ATP.

It belongs to the class-I aminoacyl-tRNA synthetase family. MetG type 1 subfamily. As to quaternary structure, monomer. Requires Zn(2+) as cofactor.

Its subcellular location is the cytoplasm. The catalysed reaction is tRNA(Met) + L-methionine + ATP = L-methionyl-tRNA(Met) + AMP + diphosphate. Its function is as follows. Is required not only for elongation of protein synthesis but also for the initiation of all mRNA translation through initiator tRNA(fMet) aminoacylation. This is Methionine--tRNA ligase from Chlamydia trachomatis serovar A (strain ATCC VR-571B / DSM 19440 / HAR-13).